The sequence spans 803 residues: Subtilisin-like protease SBT5.5 (803 aa).

An N-terminal signal peptide occupies residues 1–22; sequence MKRIFGIFIFLSLLLFLVPLLA. Positions 23–112 are cleaved as a propeptide — activation peptide; it reads SCTKEKQVYI…KSDPRKYKIH (90 aa). In terms of domain architecture, Inhibitor I9 spans 30-108; sequence VYIVYFGEHK…VSVFKSDPRK (79 aa). The 517-residue stretch at 140–656 folds into the Peptidase S8 domain; it reads KYDVNDRFRV…SRHFRPTKAA (517 aa). Residue Asp-169 is the Charge relay system of the active site. Asn-202 is a glycosylation site (N-linked (GlcNAc...) asparagine). His-244 functions as the Charge relay system in the catalytic mechanism. The PA domain maps to 409-504; sequence YAPLVYAPDV…VFSSTVDRIL (96 aa). The Charge relay system role is filled by Ser-589. The N-linked (GlcNAc...) asparagine glycan is linked to Asn-725.

This sequence belongs to the peptidase S8 family.

It is found in the secreted. This chain is Subtilisin-like protease SBT5.5, found in Arabidopsis thaliana (Mouse-ear cress).